Here is a 336-residue protein sequence, read N- to C-terminus: Ribosomal RNA large subunit methyltransferase F (336 aa).

The protein belongs to the methyltransferase superfamily. METTL16/RlmF family.

Its subcellular location is the cytoplasm. It carries out the reaction adenosine(1618) in 23S rRNA + S-adenosyl-L-methionine = N(6)-methyladenosine(1618) in 23S rRNA + S-adenosyl-L-homocysteine + H(+). In terms of biological role, specifically methylates the adenine in position 1618 of 23S rRNA. The chain is Ribosomal RNA large subunit methyltransferase F from Yersinia pestis bv. Antiqua (strain Nepal516).